The sequence spans 178 residues: MVEFYFHDNKDTLENFTEDHNSGEPVSFDQLAEIGVIYKYITTQEELDALATEREYKNRDVVTLNLPAFNNDIDAYNAKMQQFYKEHYHEDEEIRYIAEGEGYFDVRDKQDRWIRAKLSPYDLLILPAGIYHRFTLTNAAKHVKAVRLFKDEPKWEAINRDTGKNTEARELYAKTIAV.

The Fe(2+) site is built by H87, H89, E93, and H132. Ni(2+) is bound by residues H87, H89, E93, and H132.

Belongs to the acireductone dioxygenase (ARD) family. Fe(2+) is required as a cofactor. Ni(2+) serves as cofactor.

It is found in the cytoplasm. Its subcellular location is the nucleus. It catalyses the reaction 1,2-dihydroxy-5-(methylsulfanyl)pent-1-en-3-one + O2 = 4-methylsulfanyl-2-oxobutanoate + formate + 2 H(+). It carries out the reaction 1,2-dihydroxy-5-(methylsulfanyl)pent-1-en-3-one + O2 = 3-(methylsulfanyl)propanoate + CO + formate + 2 H(+). The protein operates within amino-acid biosynthesis; L-methionine biosynthesis via salvage pathway; L-methionine from S-methyl-5-thio-alpha-D-ribose 1-phosphate: step 5/6. Functionally, catalyzes 2 different reactions between oxygen and the acireductone 1,2-dihydroxy-3-keto-5-methylthiopentene (DHK-MTPene) depending upon the metal bound in the active site. Fe-containing acireductone dioxygenase (Fe-ARD) produces formate and 2-keto-4-methylthiobutyrate (KMTB), the alpha-ketoacid precursor of methionine in the methionine recycle pathway. Ni-containing acireductone dioxygenase (Ni-ARD) produces methylthiopropionate, carbon monoxide and formate, and does not lie on the methionine recycle pathway. In Candida albicans (strain SC5314 / ATCC MYA-2876) (Yeast), this protein is Acireductone dioxygenase.